Consider the following 190-residue polypeptide: Putative cyclic ADP-D-ribose synthase ThsB (190 aa).

It belongs to the Thoeris B TIR-like family. In terms of assembly, homodimer.

It is found in the cytoplasm. Activated upon phage infection. In terms of biological role, TIR-like domain-containing component of the Thoeris antiviral defense system, composed of ThsA and ThsB. Expression of ThsA and ThsB in B.subtilis (strain BEST7003) confers resistance to phages SBSphiC, SBSphiJ and SPO1. Phage infection activates this protein, generating a signal molecule that in turn activates ThsA. Functionally, probably hydrolyzes NAD(+) to make a cyclic ADP-D-ribose (cADPR) signaling molecule; might make 3'cADPR. In Bacillus amyloliquefaciens (strain Y2) (Bacillus amyloliquefaciens subsp. plantarum (strain B9601-Y2)), this protein is Putative cyclic ADP-D-ribose synthase ThsB.